A 348-amino-acid chain; its full sequence is tRNA N6-adenosine threonylcarbamoyltransferase (348 aa).

Fe cation is bound by residues His-111 and His-115. Substrate-binding positions include 134–138, Asp-167, Gly-180, and Asn-276; that span reads LVSGG. Asp-304 provides a ligand contact to Fe cation.

This sequence belongs to the KAE1 / TsaD family. It depends on Fe(2+) as a cofactor.

The protein resides in the cytoplasm. The enzyme catalyses L-threonylcarbamoyladenylate + adenosine(37) in tRNA = N(6)-L-threonylcarbamoyladenosine(37) in tRNA + AMP + H(+). Required for the formation of a threonylcarbamoyl group on adenosine at position 37 (t(6)A37) in tRNAs that read codons beginning with adenine. Is involved in the transfer of the threonylcarbamoyl moiety of threonylcarbamoyl-AMP (TC-AMP) to the N6 group of A37, together with TsaE and TsaB. TsaD likely plays a direct catalytic role in this reaction. This Bordetella petrii (strain ATCC BAA-461 / DSM 12804 / CCUG 43448) protein is tRNA N6-adenosine threonylcarbamoyltransferase.